Consider the following 601-residue polypeptide: Zinc finger protein 37 (601 aa).

The KRAB domain occupies 1–70; it reads MATPEPAESD…VRANKNSSSS (70 aa). Threonine 3 carries the phosphothreonine modification. Phosphoserine is present on serine 9. Residues 30-43 are compositionally biased toward polar residues; it reads ETCSNPASMGNQDP. The segment at 30 to 254 is disordered; it reads ETCSNPASMG…SKSDKAPGSG (225 aa). A compositionally biased stretch (low complexity) spans 60–70; it reads SVRANKNSSSS. Residues 77 to 88 are compositionally biased toward polar residues; the sequence is TGTSAKVQQDGA. Basic and acidic residues-rich tracts occupy residues 115–136, 164–174, and 183–238; these read KSSE…PSEK, KKPDTANEYRK, and VNRD…EKRK. A C2H2-type 1 zinc finger spans residues 257–279; the sequence is YECNQCGKVLSHKQGLLDHQRTH. Residues 285–303 form a C2H2-type 2; atypical zinc finger; sequence YECYECGIAFSQKSHLVVH. 10 consecutive C2H2-type zinc fingers follow at residues 314–337, 343–365, 371–393, 399–421, 427–449, 455–477, 483–505, 511–533, 539–561, and 570–592; these read YECV…RISH, YKCN…IRSH, YECK…VRTH, YECN…MRIH, FECT…QRTH, YKCK…MRTH, FECN…QRVH, YECV…QRTH, FECY…QRSH, and YECV…MKTH.

This sequence belongs to the krueppel C2H2-type zinc-finger protein family. In terms of tissue distribution, expressed in testes, brain, kidney, spleen, thymus, lung, and at low levels in liver.

It is found in the nucleus. In terms of biological role, may be involved in transcriptional regulation. The protein is Zinc finger protein 37 (Zfp37) of Rattus norvegicus (Rat).